Here is a 167-residue protein sequence, read N- to C-terminus: Small heat shock protein C1 (167 aa).

Residues 59–167 (PLYESNSIKS…EQDAREITIN (109 aa)) form the sHSP domain.

This sequence belongs to the small heat shock protein (HSP20) family.

The polypeptide is Small heat shock protein C1 (hspC1) (Rickettsia felis (strain ATCC VR-1525 / URRWXCal2) (Rickettsia azadi)).